The sequence spans 521 residues: MSEDRKAIKRALISVYDKTGLEDLAQALHRAGVEIVSTGSTAAKIADLGIPVTPVEELTGFPECLEGRVKTLHPKVHAGILADTRKDDHLRQLDELGVTPFQLVVVNLYPFAETVASGADFDDCVEQIDIGGPSMVRAAAKNHPSVAVVTSPGQYEDVVSVLNTGGFSRAERTKLAAEAFRHTATYDVTVATWISEQLSAADTELEFPGWIGSTSTLARSLRYGENPHQSAALYVSHGASGLAQATQLHGKEMSYNNYTDSDAAWRAAWDHERPCVAIIKHANPCGIAVSDESIAAAHRQAHACDSVSAFGGVIASNREVSVEMAEQVAEIFTEVIIAPSYEEGAVEVLSQKKNIRILQAEAPVREGFETREISGGLLVQERDLIHAEGDNPANWTLAAGEAVSAEVLKDLEFAWTAVRSVKSNAILLAKDGATVGVGMGQVNRVDSARLAVDRAGEERATGSVAASDAFFPFADGFEVLAQAGITAVVQPGGSIRDDEVIEAANKAGVTMYLTGARHFSH.

In terms of domain architecture, MGS-like spans 1–150 (MSEDRKAIKR…KNHPSVAVVT (150 aa)).

Belongs to the PurH family.

It catalyses the reaction (6R)-10-formyltetrahydrofolate + 5-amino-1-(5-phospho-beta-D-ribosyl)imidazole-4-carboxamide = 5-formamido-1-(5-phospho-D-ribosyl)imidazole-4-carboxamide + (6S)-5,6,7,8-tetrahydrofolate. It carries out the reaction IMP + H2O = 5-formamido-1-(5-phospho-D-ribosyl)imidazole-4-carboxamide. It participates in purine metabolism; IMP biosynthesis via de novo pathway; 5-formamido-1-(5-phospho-D-ribosyl)imidazole-4-carboxamide from 5-amino-1-(5-phospho-D-ribosyl)imidazole-4-carboxamide (10-formyl THF route): step 1/1. Its pathway is purine metabolism; IMP biosynthesis via de novo pathway; IMP from 5-formamido-1-(5-phospho-D-ribosyl)imidazole-4-carboxamide: step 1/1. This is Bifunctional purine biosynthesis protein PurH from Corynebacterium efficiens (strain DSM 44549 / YS-314 / AJ 12310 / JCM 11189 / NBRC 100395).